The following is a 612-amino-acid chain: Sulfite reductase [NADPH] flavoprotein alpha-component (612 aa).

The 139-residue stretch at 64–202 (VTLISASQTG…QAQQWRQQVV (139 aa)) folds into the Flavodoxin-like domain. Residues 70-75 (SQTGNA), 117-120 (STQG), and 153-162 (LGDTSYEHFC) contribute to the FMN site. Residues 247–461 (TAPLTAQLSV…IEHNDNFRLP (215 aa)) form the FAD-binding FR-type domain. FAD-binding positions include Thr335, Lys369, 399 to 402 (RLYS), 417 to 419 (TVG), Tyr423, and 432 to 435 (GGAS). Residues 532-533 (SR), 538-542 (KIYVQ), and Asp574 contribute to the NADP(+) site. FAD is bound at residue Tyr612.

It belongs to the NADPH-dependent sulphite reductase flavoprotein subunit CysJ family. The protein in the N-terminal section; belongs to the flavodoxin family. In the C-terminal section; belongs to the flavoprotein pyridine nucleotide cytochrome reductase family. As to quaternary structure, alpha(8)-beta(8). The alpha component is a flavoprotein, the beta component is a hemoprotein. It depends on FAD as a cofactor. Requires FMN as cofactor.

The catalysed reaction is hydrogen sulfide + 3 NADP(+) + 3 H2O = sulfite + 3 NADPH + 4 H(+). It participates in sulfur metabolism; hydrogen sulfide biosynthesis; hydrogen sulfide from sulfite (NADPH route): step 1/1. In terms of biological role, component of the sulfite reductase complex that catalyzes the 6-electron reduction of sulfite to sulfide. This is one of several activities required for the biosynthesis of L-cysteine from sulfate. The flavoprotein component catalyzes the electron flow from NADPH -&gt; FAD -&gt; FMN to the hemoprotein component. In Yersinia pseudotuberculosis serotype O:1b (strain IP 31758), this protein is Sulfite reductase [NADPH] flavoprotein alpha-component.